The following is a 146-amino-acid chain: MYSANRSHRAETRNRSKDELRKVINSLEKVRRWEKKLVLIKDTNIRIYKWVPVSAQNIMAPPKIKEVKEVDEESNQVPSAENSQDSTSVTQPPPQFDINEDSNFSTGDHFDSDSNQTFEPQNYQGGATGSTDFSSMRDAEMTSKQP.

A disordered region spans residues 59-146 (MAPPKIKEVK…RDAEMTSKQP (88 aa)). 2 stretches are compositionally biased toward polar residues: residues 75-90 (NQVP…TSVT) and 113-134 (DSNQ…TDFS). The span at 135–146 (SMRDAEMTSKQP) shows a compositional bias: basic and acidic residues.

Belongs to the BCL7 family. Ubiquitous.

Its subcellular location is the nucleus. Required for the terminal differentiation of seam cells, and the differentiation of distal tip cells important for normal somatic gonad and germ cell development. Plays a role in the Wnt signaling pathway, regulating the expression of beta-catenin homologs wrm-1, bar-1 and sys-1, and the localization of wrm-1 and the wnt signaling pathway component pop-1 during asymmetric cell division of seam cells and the Z-cell lineage of the somatic gonad, respectively. May have a pro-apoptotic role, possibly linked to the negative regulation of expression of anti-apoptotic factor ced-9. This is BCL7-like protein from Caenorhabditis elegans.